Consider the following 425-residue polypeptide: Histone-binding protein RBBP7 (425 aa).

A2 carries the N-acetylalanine modification. S3 bears the Phosphoserine mark. K4 is subject to N6-acetyllysine; alternate. K4 participates in a covalent cross-link: Glycyl lysine isopeptide (Lys-Gly) (interchain with G-Cter in SUMO2); alternate. Residue K4 forms a Glycyl lysine isopeptide (Lys-Gly) (interchain with G-Cter in ubiquitin); alternate linkage. T10 carries the phosphothreonine modification. WD repeat units lie at residues 47–122 (QWLP…KINH), 128–173 (RARY…LRLR), 181–217 (GLSW…KIVD), 228–269 (VVED…HLVD), 275–312 (VNCL…LHTF), 318–369 (EIFQ…LFIH), and 376–403 (ISDF…IWQM). S95 is modified (phosphoserine). K101 participates in a covalent cross-link: Glycyl lysine isopeptide (Lys-Gly) (interchain with G-Cter in SUMO2). At K119 the chain carries N6-acetyllysine. Residue K155 forms a Glycyl lysine isopeptide (Lys-Gly) (interchain with G-Cter in SUMO2) linkage. K159 carries the post-translational modification N6-acetyllysine; alternate. K159 participates in a covalent cross-link: Glycyl lysine isopeptide (Lys-Gly) (interchain with G-Cter in SUMO2); alternate. Residue S354 is modified to Phosphoserine.

This sequence belongs to the WD repeat RBAP46/RBAP48/MSI1 family. Binds directly to helix 1 of the histone fold of histone H4, a region that is not accessible when H4 is in chromatin. Subunit of the type B histone acetyltransferase (HAT) complex, composed of RBBP7 and HAT1. Subunit of the core histone deacetylase (HDAC) complex, which is composed of HDAC1, HDAC2, RBBP4 and RBBP7. The core HDAC complex associates with SIN3A, ARID4B/SAP180, SAP18, SAP30, SAP130, SUDS3/SAP45 and possibly ARID4A/RBP1 and ING1 to form the SIN3 HDAC complex. Component of the nucleosome remodeling and deacetylase (NuRD) repressor complex, composed of core proteins MTA1, MTA2, MTA3, RBBP4, RBBP7, HDAC1, HDAC2, MBD2, MBD3, and peripherally associated proteins CDK2AP1, CDK2AP2, GATAD2A, GATAD2B, CHD3, CHD4 and CHD5. The exact stoichiometry of the NuRD complex is unknown, and some subunits such as MBD2 and MBD3, GATAD2A and GATAD2B, and CHD3, CHD4 and CHD5 define mutually exclusive NuRD complexes. The NuRD complex may interact with MBD3L1. The NuRD complex may interact with MBD3L2. Subunit of the PRC2/EED-EZH2 complex, which is composed of at least EED, EZH2, RBBP4, RBBP7 and SUZ12. The PRC2/EED-EZH2 complex may also associate with HDAC1. Component of the NURF-1 ISWI chromatin remodeling complex (also called the nucleosome-remodeling factor (NURF) complex) at least composed of SMARCA1, BPTF, RBBP4 and RBBP7. Within the complex interacts with SMARCA1. Component of the BPFT-SMARCA1 complex at least composed of SMARCA1, BPFT, RBBP4 and RBBP7; the complex is catalytically inactive and does not remodel chromatin. Within the complex interacts with SMARCA1. Interacts with BRCA1. Interacts with CDK2AP1. Interacts with CENPA. Interacts with CHD3. Interacts with CHD4. Interacts with CREBBP, and this interaction may be enhanced by the binding of phosphorylated CREB1 to CREBBP. Interacts with HDAC7. Interacts with MTA1. Interacts with PWWP2B. Interacts with RB1 (via viral protein-binding domain). Interacts with SUV39H1.

Its subcellular location is the nucleus. Functionally, core histone-binding subunit that may target chromatin remodeling factors, histone acetyltransferases and histone deacetylases to their histone substrates in a manner that is regulated by nucleosomal DNA. Component of several complexes which regulate chromatin metabolism. These include the type B histone acetyltransferase (HAT) complex, which is required for chromatin assembly following DNA replication; the core histone deacetylase (HDAC) complex, which promotes histone deacetylation and consequent transcriptional repression; the nucleosome remodeling and histone deacetylase complex (the NuRD complex), which promotes transcriptional repression by histone deacetylation and nucleosome remodeling; and the PRC2/EED-EZH2 complex, which promotes repression of homeotic genes during development; and the NURF (nucleosome remodeling factor) complex. In Bos taurus (Bovine), this protein is Histone-binding protein RBBP7 (RBBP7).